Reading from the N-terminus, the 199-residue chain is NAD(P)H dehydrogenase (quinone) (199 aa).

A Flavodoxin-like domain is found at valine 4–valine 190. Residues serine 10–isoleucine 15 and threonine 78–tyrosine 80 each bind FMN. Residue tyrosine 12 coordinates NAD(+). Position 98 (tryptophan 98) interacts with substrate. Residues serine 113–glycine 119 and histidine 134 contribute to the FMN site.

This sequence belongs to the WrbA family. Requires FMN as cofactor.

The enzyme catalyses a quinone + NADH + H(+) = a quinol + NAD(+). It catalyses the reaction a quinone + NADPH + H(+) = a quinol + NADP(+). This is NAD(P)H dehydrogenase (quinone) from Paraburkholderia phymatum (strain DSM 17167 / CIP 108236 / LMG 21445 / STM815) (Burkholderia phymatum).